We begin with the raw amino-acid sequence, 296 residues long: Small ribosomal subunit biogenesis GTPase RsgA (296 aa).

A CP-type G domain is found at 63-224 (RNQLVRPPVA…IADTPGFSSY (162 aa)). Residues 112 to 115 (SKTD) and 167 to 175 (GQTGAGKST) contribute to the GTP site. Residues Cys-248, Cys-253, His-255, and Cys-261 each contribute to the Zn(2+) site.

Belongs to the TRAFAC class YlqF/YawG GTPase family. RsgA subfamily. In terms of assembly, monomer. Associates with 30S ribosomal subunit, binds 16S rRNA. It depends on Zn(2+) as a cofactor.

Its subcellular location is the cytoplasm. Functionally, one of several proteins that assist in the late maturation steps of the functional core of the 30S ribosomal subunit. Helps release RbfA from mature subunits. May play a role in the assembly of ribosomal proteins into the subunit. Circularly permuted GTPase that catalyzes slow GTP hydrolysis, GTPase activity is stimulated by the 30S ribosomal subunit. The polypeptide is Small ribosomal subunit biogenesis GTPase RsgA (Limosilactobacillus reuteri (strain DSM 20016) (Lactobacillus reuteri)).